Here is a 420-residue protein sequence, read N- to C-terminus: Tol-Pal system protein TolB (420 aa).

The first 21 residues, 1–21, serve as a signal peptide directing secretion; it reads MKLFVHLVLFISLFIPYFTKA.

Belongs to the TolB family. In terms of assembly, the Tol-Pal system is composed of five core proteins: the inner membrane proteins TolA, TolQ and TolR, the periplasmic protein TolB and the outer membrane protein Pal. They form a network linking the inner and outer membranes and the peptidoglycan layer.

The protein resides in the periplasm. In terms of biological role, part of the Tol-Pal system, which plays a role in outer membrane invagination during cell division and is important for maintaining outer membrane integrity. In Wolbachia sp. subsp. Drosophila simulans (strain wRi), this protein is Tol-Pal system protein TolB.